Reading from the N-terminus, the 342-residue chain is [Citrate [pro-3S]-lyase] ligase (342 aa).

In terms of domain architecture, N-acetyltransferase spans 1-127 (MTLILKRVQL…RAVLMENSRE (127 aa)).

It catalyses the reaction holo-[citrate lyase ACP] + acetate + ATP = acetyl-[citrate lyase ACP] + AMP + diphosphate. In terms of biological role, acetylation of prosthetic group (2-(5''-phosphoribosyl)-3'-dephosphocoenzyme-A) of the gamma subunit of citrate lyase. The chain is [Citrate [pro-3S]-lyase] ligase (citC) from Klebsiella pneumoniae.